The sequence spans 507 residues: MRTIYLSLLVFIIVLALNEVMAKKHSSTPKLRRSDFPEDFIFGAATSAYQVEGAAHEDGRGPSIWDTFSEKYPEKIKDGSNGSIASDSYHLYKEDVGLLHQIGFDAYRFSISWSRILPRENLKGGINQAGIDYYNNLINELLSKGIKPFATIFHWDTPQSLEDAYGGFLGAEIVNDFRDYADICFKNFGDRVKHWMTLNEPLTVVQQGYVAGVMAPGRCSKFTNPNCTAGNGATEPYIVGHNLILAHGEAVKVYREKYKASQKGQVGIALNAGWNLPYSESAEDRLAAARAMAFTFDYFMEPLVTGKYPIDMVNYVKGGRLPTFTAKQSKMLKGSYDFIGRNYYSSSYAKDVPCSSENVTLFSDPCASVTGEREGVPIGPKAASDWLLIYPKGIRDLLLYAKYKFKDPVMYITENGRDEASTGKIDLKDSERIDYYAQHLKMVQDAISIGANVKGFFAWSLLDNFEWATGYAVRFGLVYVDFNGGRKRYPKKSAKWFKKLLNEKKKN.

An N-terminal signal peptide occupies residues 1 to 22 (MRTIYLSLLVFIIVLALNEVMA). Gln-50 lines the a beta-D-glucoside pocket. A glycan (N-linked (GlcNAc...) asparagine) is linked at Asn-81. A beta-D-glucoside is bound by residues His-154 and 199-200 (NE). Glu-200 (proton donor) is an active-site residue. A disulfide bond links Cys-219 and Cys-227. N-linked (GlcNAc...) asparagine glycosylation is present at Asn-226. Tyr-344 is a binding site for a beta-D-glucoside. The N-linked (GlcNAc...) asparagine glycan is linked to Asn-358. Residues Glu-414, Trp-459, 466–467 (EW), and Phe-475 each bind a beta-D-glucoside. Glu-414 serves as the catalytic Nucleophile.

Belongs to the glycosyl hydrolase 1 family.

It catalyses the reaction Hydrolysis of terminal, non-reducing beta-D-glucosyl residues with release of beta-D-glucose.. The sequence is that of Beta-glucosidase 12 from Arabidopsis thaliana (Mouse-ear cress).